The following is a 483-amino-acid chain: UDP-N-acetylmuramoyl-L-alanyl-D-glutamate--2,6-diaminopimelate ligase (483 aa).

Residue Ser-29 coordinates UDP-N-acetyl-alpha-D-muramoyl-L-alanyl-D-glutamate. An ATP-binding site is contributed by 107-113; the sequence is GTSGKTS. UDP-N-acetyl-alpha-D-muramoyl-L-alanyl-D-glutamate-binding positions include 149–150, Ser-176, Gln-182, and Arg-184; that span reads TT. Lys-216 bears the N6-carboxylysine mark. Meso-2,6-diaminopimelate contacts are provided by residues Arg-380, 404 to 407, Gly-452, and Glu-456; that span reads DNPR. The short motif at 404-407 is the Meso-diaminopimelate recognition motif element; the sequence is DNPR.

It belongs to the MurCDEF family. MurE subfamily. Mg(2+) is required as a cofactor. In terms of processing, carboxylation is probably crucial for Mg(2+) binding and, consequently, for the gamma-phosphate positioning of ATP.

It localises to the cytoplasm. The catalysed reaction is UDP-N-acetyl-alpha-D-muramoyl-L-alanyl-D-glutamate + meso-2,6-diaminopimelate + ATP = UDP-N-acetyl-alpha-D-muramoyl-L-alanyl-gamma-D-glutamyl-meso-2,6-diaminopimelate + ADP + phosphate + H(+). It participates in cell wall biogenesis; peptidoglycan biosynthesis. In terms of biological role, catalyzes the addition of meso-diaminopimelic acid to the nucleotide precursor UDP-N-acetylmuramoyl-L-alanyl-D-glutamate (UMAG) in the biosynthesis of bacterial cell-wall peptidoglycan. The protein is UDP-N-acetylmuramoyl-L-alanyl-D-glutamate--2,6-diaminopimelate ligase of Chelativorans sp. (strain BNC1).